The primary structure comprises 271 residues: Glutamate racemase (271 aa).

Residues Asp13 to Ser14 and Tyr45 to Gly46 contribute to the substrate site. Cys77 (proton donor/acceptor) is an active-site residue. Residue Asn78–Thr79 participates in substrate binding. Cys192 acts as the Proton donor/acceptor in catalysis. Thr193–His194 lines the substrate pocket.

The protein belongs to the aspartate/glutamate racemases family.

The enzyme catalyses L-glutamate = D-glutamate. It participates in cell wall biogenesis; peptidoglycan biosynthesis. Its function is as follows. Provides the (R)-glutamate required for cell wall biosynthesis. The chain is Glutamate racemase from Sinorhizobium medicae (strain WSM419) (Ensifer medicae).